A 238-amino-acid chain; its full sequence is uncharacterized protein (238 aa).

This is an uncharacterized protein from Haemophilus influenzae (strain ATCC 51907 / DSM 11121 / KW20 / Rd).